A 303-amino-acid chain; its full sequence is MAGLESAPAARPSLTSISSGELRSLWTCDCELALLPLGQLLRLQPGAFQLRGDQLVVPAPAEPASARGGFNVFGDGFVRLDGQLYRLSSYMRRYVELTNYCDYKDYRETILSKPMLFFVHVQTKKDSLKERTYAFLVNTRHPKIRRQIEQGMDMVISSVIGESYRLQFDFQEVVKNFFPPGNKVVNGEDLSFAYEFKADALFDFFYWFGLSNSTVKVNGKVLNLSSTSPEKKETIKLFLEKMSEPLIRRSSFSDRKFSVTSRGSIDEVFNCNLSPRSSLMEPLVAELPFPCVLESEETPNPFI.

Its subcellular location is the cytoplasm. Its function is as follows. Involved in processes that promote adipocyte differentiation, lipid accumulation, and glucose uptake in mature adipocytes. This Bos taurus (Bovine) protein is Mesenteric estrogen-dependent adipogenesis protein (MEDAG).